The chain runs to 383 residues: BRISC and BRCA1-A complex member 2 (383 aa).

Met1 is subject to N-acetylmethionine. A Phosphoserine modification is found at Ser2. UEV-like stretches follow at residues 30 to 147 (DATN…TLLE) and 275 to 364 (IAAF…RAKA).

Belongs to the BABAM2 family. As to quaternary structure, component of the ARISC complex, at least composed of UIMC1/RAP80, ABRAXAS1, BRCC3/BRCC36, BABAM2 and BABAM1/NBA1. Component of the BRCA1-A complex, at least composed of BRCA1, BARD1, UIMC1/RAP80, ABRAXAS1, BRCC3/BRCC36, BABAM2 and BABAM1/NBA1. In the BRCA1-A complex, interacts directly with ABRAXAS1, BRCC3/BRCC36 and BABAM1/NBA1. Binds polyubiquitin. Component of the BRISC complex, at least composed of ABRAXAS2, BRCC3/BRCC36, BABAM2 and BABAM1/NBA1. Identified in a complex with SHMT2 and the other subunits of the BRISC complex. Component of the BRCA1/BRCA2 containing complex (BRCC), which also contains BRCA1, BRCA2, BARD1, BRCC3/BRCC36 and RAD51. BRCC is a ubiquitin E3 ligase complex that enhances cellular survival following DNA damage. May interact with FAS and TNFRSF1A. In terms of tissue distribution, expressed in all cell lines examined. Highly expressed in placenta.

The protein localises to the cytoplasm. It is found in the nucleus. Component of the BRCA1-A complex, a complex that specifically recognizes 'Lys-63'-linked ubiquitinated histones H2A and H2AX at DNA lesions sites, leading to target the BRCA1-BARD1 heterodimer to sites of DNA damage at double-strand breaks (DSBs). The BRCA1-A complex also possesses deubiquitinase activity that specifically removes 'Lys-63'-linked ubiquitin on histones H2A and H2AX. In the BRCA1-A complex, it acts as an adapter that bridges the interaction between BABAM1/NBA1 and the rest of the complex, thereby being required for the complex integrity and modulating the E3 ubiquitin ligase activity of the BRCA1-BARD1 heterodimer. Component of the BRISC complex, a multiprotein complex that specifically cleaves 'Lys-63'-linked ubiquitin in various substrates. Within the BRISC complex, acts as an adapter that bridges the interaction between BABAM1/NBA1 and the rest of the complex, thereby being required for the complex integrity. The BRISC complex is required for normal mitotic spindle assembly and microtubule attachment to kinetochores via its role in deubiquitinating NUMA1. The BRISC complex plays a role in interferon signaling via its role in the deubiquitination of the interferon receptor IFNAR1; deubiquitination increases IFNAR1 activity by enhancing its stability and cell surface expression. Down-regulates the response to bacterial lipopolysaccharide (LPS) via its role in IFNAR1 deubiquitination. May play a role in homeostasis or cellular differentiation in cells of neural, epithelial and germline origins. May also act as a death receptor-associated anti-apoptotic protein, which inhibits the mitochondrial apoptotic pathway. May regulate TNF-alpha signaling through its interactions with TNFRSF1A; however these effects may be indirect. This chain is BRISC and BRCA1-A complex member 2, found in Homo sapiens (Human).